The primary structure comprises 116 residues: Peptidyl-tRNA hydrolase (116 aa).

It belongs to the PTH2 family.

It is found in the cytoplasm. The catalysed reaction is an N-acyl-L-alpha-aminoacyl-tRNA + H2O = an N-acyl-L-amino acid + a tRNA + H(+). In terms of biological role, the natural substrate for this enzyme may be peptidyl-tRNAs which drop off the ribosome during protein synthesis. In Methanococcus maripaludis (strain C6 / ATCC BAA-1332), this protein is Peptidyl-tRNA hydrolase.